The sequence spans 346 residues: NADH-quinone oxidoreductase subunit H (346 aa).

The next 8 membrane-spanning stretches (helical) occupy residues 6 to 26, 76 to 96, 128 to 148, 166 to 186, 198 to 218, 260 to 280, 289 to 309, and 324 to 344; these read ILFW…ACAY, IMYL…WSVV, ILFL…AGWA, ISYE…TGSL, LWNI…VAMF, ITMS…PFGI, LFGL…FVWV, and LGWK…SLYI.

This sequence belongs to the complex I subunit 1 family. NDH-1 is composed of 14 different subunits. Subunits NuoA, H, J, K, L, M, N constitute the membrane sector of the complex.

Its subcellular location is the cell inner membrane. The enzyme catalyses a quinone + NADH + 5 H(+)(in) = a quinol + NAD(+) + 4 H(+)(out). NDH-1 shuttles electrons from NADH, via FMN and iron-sulfur (Fe-S) centers, to quinones in the respiratory chain. The immediate electron acceptor for the enzyme in this species is believed to be ubiquinone. Couples the redox reaction to proton translocation (for every two electrons transferred, four hydrogen ions are translocated across the cytoplasmic membrane), and thus conserves the redox energy in a proton gradient. This subunit may bind ubiquinone. The chain is NADH-quinone oxidoreductase subunit H from Leptospira borgpetersenii serovar Hardjo-bovis (strain JB197).